The following is a 166-amino-acid chain: Large ribosomal subunit protein uL10 (166 aa).

The protein belongs to the universal ribosomal protein uL10 family. Part of the ribosomal stalk of the 50S ribosomal subunit. The N-terminus interacts with L11 and the large rRNA to form the base of the stalk. The C-terminus forms an elongated spine to which L12 dimers bind in a sequential fashion forming a multimeric L10(L12)X complex.

Forms part of the ribosomal stalk, playing a central role in the interaction of the ribosome with GTP-bound translation factors. In Bacillus velezensis (strain DSM 23117 / BGSC 10A6 / LMG 26770 / FZB42) (Bacillus amyloliquefaciens subsp. plantarum), this protein is Large ribosomal subunit protein uL10.